The chain runs to 443 residues: MSNTESIIVSQTKTTSWRKSDTTWTLGLFGTAIGAGVLFFPIRAGFGGLIPILLMLVLAYPIAFYCHRALARLCLSGSNPSGNITETVEEHFGKTGGVVITFLYFFAICPLLWIYGVTITNTFMTFWENQLQMPALNRGFVALFLLLLMAFVIWFGKDLMVKVMSFLVFPFIASLILISLSLIPYWNSAVIDQVSMSDLSFTGHDGILVTVWLGISIMVFSFNFSPIVSSFVVSKREEYEGEFGKEFTEQKCSKIIGRASLLMVAVVMFFAFSCLFTLSPQNMAEAKAQNIPVLSYLANHFATMTGTKSTFATVLEYGASIIALVAIFKSFFGHYLGTLEGLNGLVLKFGYKGDKKKVSVGKLNTISMIFIMGSTWVVAYANPNILDLIEAMGAPIIASLLCLLPMFAIRKVPALAKFRGRTENLFVTAVGLLTILNIVYKLF.

The next 11 helical transmembrane spans lie at Thr22–Ile42, Ala44–Phe64, Gly97–Val117, Phe140–Met160, Val163–Ile183, Ile207–Ile227, Ala259–Ser279, Ala319–Leu339, Ile366–Leu386, Ile389–Ile409, and Glu423–Phe443.

This sequence belongs to the amino acid/polyamine transporter 2 family. SdaC/TdcC subfamily.

It localises to the cell inner membrane. The catalysed reaction is L-threonine(in) + H(+)(in) = L-threonine(out) + H(+)(out). It catalyses the reaction L-serine(in) + H(+)(in) = L-serine(out) + H(+)(out). Its function is as follows. Involved in the import of threonine and serine into the cell, with the concomitant import of a proton (symport system). In Enterobacter sp. (strain 638), this protein is Threonine/serine transporter TdcC.